Reading from the N-terminus, the 640-residue chain is Fructose-1,6-bisphosphatase class 3 (640 aa).

This sequence belongs to the FBPase class 3 family. It depends on Mn(2+) as a cofactor.

The catalysed reaction is beta-D-fructose 1,6-bisphosphate + H2O = beta-D-fructose 6-phosphate + phosphate. It functions in the pathway carbohydrate biosynthesis; gluconeogenesis. This Lactococcus lactis subsp. cremoris (strain MG1363) protein is Fructose-1,6-bisphosphatase class 3.